The primary structure comprises 68 residues: Large ribosomal subunit protein bL32 (68 aa).

Residues 1–20 (MAVQQNKVSKSRRNNRRAHD) form a disordered region.

The protein belongs to the bacterial ribosomal protein bL32 family.

This Ruegeria sp. (strain TM1040) (Silicibacter sp.) protein is Large ribosomal subunit protein bL32.